A 252-amino-acid polypeptide reads, in one-letter code: Methylthioribulose-1-phosphate dehydratase (252 aa).

Cys105 serves as a coordination point for substrate. Zn(2+)-binding residues include His123 and His125. The active-site Proton donor/acceptor is Glu151. His208 is a Zn(2+) binding site.

The protein belongs to the aldolase class II family. MtnB subfamily. Requires Zn(2+) as cofactor.

It is found in the cytoplasm. The enzyme catalyses 5-(methylsulfanyl)-D-ribulose 1-phosphate = 5-methylsulfanyl-2,3-dioxopentyl phosphate + H2O. It functions in the pathway amino-acid biosynthesis; L-methionine biosynthesis via salvage pathway; L-methionine from S-methyl-5-thio-alpha-D-ribose 1-phosphate: step 2/6. Catalyzes the dehydration of methylthioribulose-1-phosphate (MTRu-1-P) into 2,3-diketo-5-methylthiopentyl-1-phosphate (DK-MTP-1-P). This is Methylthioribulose-1-phosphate dehydratase from Sclerotinia sclerotiorum (strain ATCC 18683 / 1980 / Ss-1) (White mold).